The chain runs to 340 residues: Ferredoxin--NADP reductase (340 aa).

The FAD site is built by Thr-20, Asp-39, Gln-47, Tyr-52, Val-92, Phe-126, Asp-293, and Thr-334.

It belongs to the ferredoxin--NADP reductase type 2 family. Homodimer. Requires FAD as cofactor.

The enzyme catalyses 2 reduced [2Fe-2S]-[ferredoxin] + NADP(+) + H(+) = 2 oxidized [2Fe-2S]-[ferredoxin] + NADPH. This Gluconobacter oxydans (strain 621H) (Gluconobacter suboxydans) protein is Ferredoxin--NADP reductase.